The following is a 166-amino-acid chain: Crossover junction endodeoxyribonuclease RuvC (166 aa).

Residues Asp-7, Glu-70, and His-143 contribute to the active site. 3 residues coordinate Mg(2+): Asp-7, Glu-70, and His-143.

Belongs to the RuvC family. In terms of assembly, homodimer which binds Holliday junction (HJ) DNA. The HJ becomes 2-fold symmetrical on binding to RuvC with unstacked arms; it has a different conformation from HJ DNA in complex with RuvA. In the full resolvosome a probable DNA-RuvA(4)-RuvB(12)-RuvC(2) complex forms which resolves the HJ. It depends on Mg(2+) as a cofactor.

It localises to the cytoplasm. It carries out the reaction Endonucleolytic cleavage at a junction such as a reciprocal single-stranded crossover between two homologous DNA duplexes (Holliday junction).. Functionally, the RuvA-RuvB-RuvC complex processes Holliday junction (HJ) DNA during genetic recombination and DNA repair. Endonuclease that resolves HJ intermediates. Cleaves cruciform DNA by making single-stranded nicks across the HJ at symmetrical positions within the homologous arms, yielding a 5'-phosphate and a 3'-hydroxyl group; requires a central core of homology in the junction. The consensus cleavage sequence is 5'-(A/T)TT(C/G)-3'. Cleavage occurs on the 3'-side of the TT dinucleotide at the point of strand exchange. HJ branch migration catalyzed by RuvA-RuvB allows RuvC to scan DNA until it finds its consensus sequence, where it cleaves and resolves the cruciform DNA. The chain is Crossover junction endodeoxyribonuclease RuvC from Thermus thermophilus (strain ATCC BAA-163 / DSM 7039 / HB27).